A 69-amino-acid polypeptide reads, in one-letter code: Lantibiotic lichenicidin A2 (69 aa).

Positions 1–37 are excised as a propeptide; the sequence is MKNSAAREAFKGANHPAGMVSEEELKALVGGNDVNPE. Position 38 is a 2-oxobutanoic acid (threonine 38). (Z)-2,3-didehydrobutyrine occurs at positions 39, 42, and 43. The lanthionine (Ser-Cys) cross-link spans 44–48; sequence SSWTC. Serine 45 bears the 2,3-didehydroalanine (Ser) mark. 2 positions are modified to (Z)-2,3-didehydrobutyrine: threonine 50 and threonine 54. The lanthionine (Ser-Cys) cross-link spans 56 to 60; the sequence is SASLC. 2 consecutive cross-links (beta-methyllanthionine (Thr-Cys)) follow at residues 62-65 and 66-69; these read TTKC and TSRC. A (Z)-2,3-didehydrobutyrine modification is found at threonine 63.

In terms of processing, maturation of lantibiotics involves the enzymatic conversion of Thr, and Ser into dehydrated AA and the formation of thioether bonds with cysteine. This is followed by membrane translocation and cleavage of the modified precursor.

It localises to the secreted. It is found in the cell wall. In terms of biological role, lanthionine-containing peptide antibiotic (lantibiotic) active on Gram-positive bacteria. The bactericidal activity of lantibiotics is based on depolarization of energized bacterial cytoplasmic membranes, initiated by the formation of aqueous transmembrane pores. When present individually, LchA2 exhibits activity towards L.lactis HP. When combined with LchA1, it displays activity towards a broad spectrum of non-pathogenic and pathogenic Gram-positive bacteria including strains of L.monocytogenes, methicillin-resistant S.aureus, S.pneumoniae and strains of vancomycin-resistant enterococci, but not towards E.faecium L4001 and BM4147-1. Combined LchA1 and LchA2 peptides also inhibit Bacillus sp. HIL-Y85/54728, L.lactis DPC3417 and B.halodurans C-125, which produce lantibiotics themselves. Inactivated by proteinase K and pronase E, but not by trypsin and chymotrypsin. This is Lantibiotic lichenicidin A2 from Bacillus licheniformis (strain ATCC 14580 / DSM 13 / JCM 2505 / CCUG 7422 / NBRC 12200 / NCIMB 9375 / NCTC 10341 / NRRL NRS-1264 / Gibson 46).